Consider the following 654-residue polypeptide: DNA ligase (654 aa).

Residues 31–35, 80–81, and Glu-109 contribute to the NAD(+) site; these read DSEYD and SL. Residue Lys-111 is the N6-AMP-lysine intermediate of the active site. Residues Arg-132, Glu-166, Lys-280, and Lys-304 each coordinate NAD(+). Cys-398, Cys-401, Cys-416, and Cys-421 together coordinate Zn(2+). The 76-residue stretch at 579 to 654 folds into the BRCT domain; it reads NIEGILSGKT…IWSEQDLLDL (76 aa).

It belongs to the NAD-dependent DNA ligase family. LigA subfamily. The cofactor is Mg(2+). Mn(2+) is required as a cofactor.

It carries out the reaction NAD(+) + (deoxyribonucleotide)n-3'-hydroxyl + 5'-phospho-(deoxyribonucleotide)m = (deoxyribonucleotide)n+m + AMP + beta-nicotinamide D-nucleotide.. Its function is as follows. DNA ligase that catalyzes the formation of phosphodiester linkages between 5'-phosphoryl and 3'-hydroxyl groups in double-stranded DNA using NAD as a coenzyme and as the energy source for the reaction. It is essential for DNA replication and repair of damaged DNA. The protein is DNA ligase of Lactococcus lactis subsp. lactis (strain IL1403) (Streptococcus lactis).